The primary structure comprises 327 residues: Glycerol-3-phosphate dehydrogenase [NAD(P)+] (327 aa).

The NADPH site is built by F13, R34, and K107. Residues K107 and G135 each coordinate sn-glycerol 3-phosphate. NADPH is bound at residue A139. 5 residues coordinate sn-glycerol 3-phosphate: K190, D243, S253, R254, and N255. The active-site Proton acceptor is the K190. Residue R254 participates in NADPH binding. Residues V276 and E277 each contribute to the NADPH site.

Belongs to the NAD-dependent glycerol-3-phosphate dehydrogenase family.

It localises to the cytoplasm. It carries out the reaction sn-glycerol 3-phosphate + NAD(+) = dihydroxyacetone phosphate + NADH + H(+). The catalysed reaction is sn-glycerol 3-phosphate + NADP(+) = dihydroxyacetone phosphate + NADPH + H(+). The protein operates within membrane lipid metabolism; glycerophospholipid metabolism. Catalyzes the reduction of the glycolytic intermediate dihydroxyacetone phosphate (DHAP) to sn-glycerol 3-phosphate (G3P), the key precursor for phospholipid synthesis. The polypeptide is Glycerol-3-phosphate dehydrogenase [NAD(P)+] (Rhizobium johnstonii (strain DSM 114642 / LMG 32736 / 3841) (Rhizobium leguminosarum bv. viciae)).